The chain runs to 387 residues: MAMPFASLSPAADHRPSFIFPFCRSSPLSAVGEEAQQHMMGARWAAAVARPPPFTAAQYEELEQQALIYKYLVAGVPVPADLLLPIRRGLDSLASRFYHHPVLGYGSYFGKKLDPEPGRCRRTDGKKWRCSKEAAPDSKYCERHMHRGRNRSRKPVEAQLVAPHSQPPATAPAAAVTSTAFQNHSLYPAIANGGGANGGGGGGGGGGSAPGSFALGSNTQLHMDNAASYSTVAAGAGNKDFRYSAYGVRPLADEHSPLITGAMDTSIDNSWCLLPSQTSTFSVSSYPMLGNLSELDQNTICSLPKVEREPLSFFGSDYVTVDSGKQENQTLRPFFDEWPKARDSWPDLADDNSLATFSATQLSISIPMATSDFSTTSSRSHNGIYSR.

Residues 53 to 88 (PFTAAQYEELEQQALIYKYLVAGVPVPADLLLPIRR) enclose the QLQ domain. 2 consecutive short sequence motifs (bipartite nuclear localization signal) follow at residues 111-129 (KKLD…KKWR) and 147-154 (RGRNRSRK). One can recognise a WRC domain in the interval 114-158 (DPEPGRCRRTDGKKWRCSKEAAPDSKYCERHMHRGRNRSRKPVEA). The interval 145–176 (MHRGRNRSRKPVEAQLVAPHSQPPATAPAAAV) is disordered.

This sequence belongs to the GRF family.

It is found in the nucleus. Transcription activator that plays a regulatory role in gibberellin-induced stem elongation. The protein is Growth-regulating factor 3 (GRF3) of Oryza sativa subsp. japonica (Rice).